The sequence spans 1004 residues: Ovochymase-2 (1004 aa).

The signal sequence occupies residues 1–19 (MPTRNLLLGSILLSLAVKG). The propeptide at 20–45 (DPGPHRGARCGVSPLGSATELNYLSR) is activation peptide. The 250-residue stretch at 46-295 (IVGGRESKKG…LLGWVSSQLN (250 aa)) folds into the Peptidase S1 1 domain. Cysteines 71 and 87 form a disulfide. His86 functions as the Charge relay system in the catalytic mechanism. Glu113 contacts Ca(2+). Residue Asn128 is glycosylated (N-linked (GlcNAc...) asparagine). Residue Asp136 is the Charge relay system of the active site. Disulfide bonds link Cys170–Cys240, Cys201–Cys219, and Cys230–Cys259. Ser234 acts as the Charge relay system in catalysis. CUB domains follow at residues 309 to 419 (QDGV…YSAV) and 429 to 541 (CGSF…FTFV). Asn351 is a glycosylation site (N-linked (GlcNAc...) asparagine). A disulfide bridge links Cys363 with Cys382. N-linked (GlcNAc...) asparagine glycosylation occurs at Asn408. 2 disulfides stabilise this stretch: Cys429-Cys456 and Cys483-Cys504. The span at 547-558 (VEDSRQGNMPST) shows a compositional bias: polar residues. The segment at 547 to 566 (VEDSRQGNMPSTNKKETTAQ) is disordered. The region spanning 580-820 (IYNSIAKVEE…FIDWIRQIMS (241 aa)) is the Peptidase S1 2 domain. Positions 584 to 1004 (IAKVEEAVPH…VVPDSDSSEP (421 aa)) are cleaved as a propeptide — activation peptide. Cystine bridges form between Cys609–Cys625, Cys706–Cys776, Cys737–Cys754, and Cys766–Cys796. A glycan (N-linked (GlcNAc...) asparagine) is linked at Asn763. Asn940 is a glycosylation site (N-linked (GlcNAc...) asparagine).

Belongs to the peptidase S1 family. In terms of processing, the catalytically inactive 110 kDa form is processed both N- and C-terminally to give rise to the 66 kDa catalytically active form. Specifically expressed in the pars recta oviduct.

Its subcellular location is the secreted. It catalyses the reaction Preferential cleavage at 371-Gly-Ser-Arg-|-Trp-374 of glycoprotein gp43 in Xenopus laevis coelemic egg envelope to yield gp41.. In terms of biological role, converts the glycoprotein envelope surrounding the egg from an unfertilizable to a fertilizable form during its transit through the pars recta portion of the oviduct by selectively hydrolyzing the envelope glycoprotein gp43. The egg envelope is converted to a sperm-penetrable form, via an increase in sperm binding. This is Ovochymase-2 (ovch2) from Xenopus laevis (African clawed frog).